The following is a 93-amino-acid chain: Small ribosomal subunit protein bS18c (93 aa).

It belongs to the bacterial ribosomal protein bS18 family. Part of the 30S ribosomal subunit.

It is found in the plastid. The protein resides in the chloroplast. This Pinus koraiensis (Korean pine) protein is Small ribosomal subunit protein bS18c.